The chain runs to 519 residues: MTQADNQNPKPMVLIILDGFGESDETTHNAIKEANTPTLDKLFRHYPHTLLEASGRAVGLPDGQMGNSEVGHLHIGGGRKVPQDLTRIDAAIASGEFYENPALIEALEKAKALNKAVHILGLLSPGGVHSRDNQIAALVELAHRCGIKKIYLHAILDGRDTPPKSALLSIEKITDQFHAYGNGKIASLIGRYYAMDRDKRWDRTEKAYDLLTQGTAQFHALTAKEGLMLAYEQGNTDEFVSPTSIHRHNETPITIEDGDVVVFMNFRADRARQLTYAFLDDHFTAFNRQVRPKLSAFVTLTAYAKDIHAAVAFPPLELHNTLGEYLSARGYRQLRIAETEKYAHVTYFLNGGQEAPFNGEDRLLIPSPKVATYDLQPEMSAVEMTNKLVEIIQNDDYDLIVCNFANPDMVGHTGDETATREAIQVIDDCLKRIITALQSVGGEALITADHGNAEKMFDEKTNQPHTAHTSNLVPLIYVGREAQFCKEVGALDDVAPTLLYLMGLEKPREMTGRNLITLK.

The Mn(2+) site is built by Asp18 and Ser68. Ser68 (phosphoserine intermediate) is an active-site residue. Substrate contacts are provided by residues His129, 159–160, Arg191, Arg197, 267–270, and Lys341; these read RD and RADR. Positions 408, 412, 449, 450, and 468 each coordinate Mn(2+).

This sequence belongs to the BPG-independent phosphoglycerate mutase family. As to quaternary structure, monomer. Mn(2+) is required as a cofactor.

The catalysed reaction is (2R)-2-phosphoglycerate = (2R)-3-phosphoglycerate. It participates in carbohydrate degradation; glycolysis; pyruvate from D-glyceraldehyde 3-phosphate: step 3/5. Catalyzes the interconversion of 2-phosphoglycerate and 3-phosphoglycerate. The chain is 2,3-bisphosphoglycerate-independent phosphoglycerate mutase from Coxiella burnetii (strain RSA 493 / Nine Mile phase I).